The following is a 469-amino-acid chain: MTTFEEFESPSTSFNFQTFDRYQPDFKMIDYSHQQATHEYHLPDQEVFQNQNEFSASPPDISSPFADEKIYKSLPRNKCPSKCLVCRNPAIGYHYDVPSCNGCKTFFRRTIITGRKFTCAKQKKCMDGTEPVDMSKRLCRACRFAKCVEVGMNPMAIQAEVKTDEGKVLRSEVLNQRESLGVVSSLIVTEEDLLSRMIEKLTFVESKVEPLHRSGMPPGYRDIRKLEEILDSKPVLVVTDIPNLKFCPSPCANEKRPRRHFTNYVHTSYLASLESSKMFEFSSQLDLESRILLMKHATLICSNMMNAFFSINEMKSDILRHPDGSMSGHMRKFDRENDVMTDHVKLIQKTLITFLNHKVDKIEYLLFKAIMLCNPAVPGLDSWNQEIIEKERNQYVKALLNYCLLQHGKLQGPTRFATILAMAPIIENQSKNQKDFHVYIKAKHFQKHKKMGTTFRKCISCMFDQIMET.

A DNA-binding region (nuclear receptor) is located at residues 80–159; the sequence is PSKCLVCRNP…VGMNPMAIQA (80 aa). 2 NR C4-type zinc fingers span residues 83-103 and 119-142; these read CLVC…CNGC and CAKQ…CRAC. The NR LBD domain occupies 230 to 459; it reads LDSKPVLVVT…KMGTTFRKCI (230 aa).

This sequence belongs to the nuclear hormone receptor family.

It localises to the nucleus. Its function is as follows. Orphan nuclear receptor. In Caenorhabditis elegans, this protein is Nuclear hormone receptor family member nhr-154 (nhr-154).